The chain runs to 571 residues: Alpha-1D adrenergic receptor (571 aa).

Residues 1–94 are Extracellular-facing; the sequence is MTFRDLLSVN…AVGGLVVSAQ (94 aa). The disordered stretch occupies residues 13–75; sequence GSRSDGSAGG…SSAGEPGAAG (63 aa). The span at 19 to 34 shows a compositional bias: gly residues; that stretch reads SAGGASAGGSGGGSGG. Over residues 35–47 the composition is skewed to low complexity; that stretch reads AAASEGRAVDGVP. Positions 48 to 57 are enriched in gly residues; it reads GTAGSGGVVG. N-linked (GlcNAc...) asparagine glycans are attached at residues asparagine 64 and asparagine 81. The helical transmembrane segment at 95 to 120 threads the bilayer; sequence GVGVGVFLAAFILMAVAGNLLVILSV. Over 121-132 the chain is Cytoplasmic; sequence ACNRHLQTVTNY. The chain crosses the membrane as a helical span at residues 133-158; sequence FIVNLAVADLLLSATVLPFSATMEVL. Residues 159–168 are Extracellular-facing; the sequence is GFWAFGRAFC. A helical membrane pass occupies residues 169-191; that stretch reads DVWAAVDVLCCTASILSLCTISV. The Cytoplasmic portion of the chain corresponds to 192–212; sequence DRYVGVRHSLKYPSIMTERKA. Residues 213–237 form a helical membrane-spanning segment; sequence AAILALLWAVAIVVSVGPLLGWKEP. Topologically, residues 238–250 are extracellular; sequence VPPDERFCGITEE. The helical transmembrane segment at 251–274 threads the bilayer; the sequence is AGYAVFSSLCSFYLPMAVIVVMYC. The Cytoplasmic segment spans residues 275–348; sequence RVYVVARSTT…KFSREKKAAK (74 aa). A helical membrane pass occupies residues 349–373; sequence TLAIVVGVFVLCWFPFFFVLPLGSL. The Extracellular portion of the chain corresponds to 374-380; that stretch reads FPQLKPS. A helical transmembrane segment spans residues 381–405; that stretch reads EGVFKVIFWLGYFNSCVNPLIYPCS. The Cytoplasmic segment spans residues 406 to 571; sequence SREFKRAFLR…DYSHLRETDI (166 aa). Cysteine 419 is lipidated: S-palmitoyl cysteine. Positions 465 to 487 are disordered; it reads LPAPEATDTPSAPEAQAPVVGRR.

This sequence belongs to the G-protein coupled receptor 1 family. Adrenergic receptor subfamily. ADRA1D sub-subfamily. In terms of assembly, interacts with FLNA (via filamin repeat 21); increases PKA-mediated phosphorylation of FLNA. In terms of processing, palmitoylated. Palmitoylation by ZDHHC21 may increase the expression of the receptor and regulate downstream signaling.

It is found in the cell membrane. This alpha-adrenergic receptor mediates its effect through the influx of extracellular calcium. This is Alpha-1D adrenergic receptor (ADRA1D) from Sus scrofa (Pig).